We begin with the raw amino-acid sequence, 122 residues long: Large ribosomal subunit protein uL14 (122 aa).

The protein belongs to the universal ribosomal protein uL14 family. In terms of assembly, part of the 50S ribosomal subunit. Forms a cluster with proteins L3 and L19. In the 70S ribosome, L14 and L19 interact and together make contacts with the 16S rRNA in bridges B5 and B8.

Functionally, binds to 23S rRNA. Forms part of two intersubunit bridges in the 70S ribosome. The chain is Large ribosomal subunit protein uL14 from Rickettsia typhi (strain ATCC VR-144 / Wilmington).